The primary structure comprises 366 residues: Flagellar P-ring protein (366 aa).

The signal sequence occupies residues Met-1–Ser-27.

This sequence belongs to the FlgI family. The basal body constitutes a major portion of the flagellar organelle and consists of four rings (L,P,S, and M) mounted on a central rod.

Its subcellular location is the periplasm. The protein resides in the bacterial flagellum basal body. In terms of biological role, assembles around the rod to form the L-ring and probably protects the motor/basal body from shearing forces during rotation. This chain is Flagellar P-ring protein, found in Leptospira interrogans serogroup Icterohaemorrhagiae serovar copenhageni (strain Fiocruz L1-130).